Here is a 176-residue protein sequence, read N- to C-terminus: Large ribosomal subunit protein uL6 (176 aa).

The protein belongs to the universal ribosomal protein uL6 family. In terms of assembly, part of the 50S ribosomal subunit.

In terms of biological role, this protein binds to the 23S rRNA, and is important in its secondary structure. It is located near the subunit interface in the base of the L7/L12 stalk, and near the tRNA binding site of the peptidyltransferase center. This chain is Large ribosomal subunit protein uL6, found in Burkholderia cenocepacia (strain HI2424).